We begin with the raw amino-acid sequence, 254 residues long: Anamorsin homolog (254 aa).

The tract at residues 4–133 (VQENNHVLYL…EVGSKSKLSF (130 aa)) is N-terminal SAM-like domain. The tract at residues 134-165 (AKKSNVAAVWKLDDNEEEERIDDEELLDEDDK) is linker. The [2Fe-2S] cluster site is built by Cys-176, Cys-185, Cys-188, and Cys-190. The tract at residues 176-190 (CGTTGKRKACKDCSC) is fe-S binding site A. [4Fe-4S] cluster-binding residues include Cys-215, Cys-218, Cys-226, and Cys-229. Short sequence motifs (cx2C motif) lie at residues 215-218 (CGSC) and 226-229 (CATC). The interval 215–229 (CGSCYLGDAFRCATC) is fe-S binding site B.

This sequence belongs to the anamorsin family. Monomer. The cofactor is [2Fe-2S] cluster. It depends on [4Fe-4S] cluster as a cofactor.

The protein resides in the cytoplasm. It localises to the mitochondrion intermembrane space. Component of the cytosolic iron-sulfur (Fe-S) protein assembly (CIA) machinery. Required for the maturation of extramitochondrial Fe-S proteins. Part of an electron transfer chain functioning in an early step of cytosolic Fe-S biogenesis, facilitating the de novo assembly of a [4Fe-4S] cluster on the cytosolic Fe-S scaffold complex. Electrons are transferred from NADPH via a FAD- and FMN-containing diflavin oxidoreductase. Together with the diflavin oxidoreductase, also required for the assembly of the diferric tyrosyl radical cofactor of ribonucleotide reductase (RNR), probably by providing electrons for reduction during radical cofactor maturation in the catalytic small subunit. The protein is Anamorsin homolog of Anopheles gambiae (African malaria mosquito).